Consider the following 238-residue polypeptide: Ribose-5-phosphate isomerase A (238 aa).

Substrate-binding positions include 30-33 (SGST), 87-90 (DGAD), and 100-103 (KGGG). E109 serves as the catalytic Proton acceptor. Residue K127 participates in substrate binding.

This sequence belongs to the ribose 5-phosphate isomerase family. Homodimer.

It catalyses the reaction aldehydo-D-ribose 5-phosphate = D-ribulose 5-phosphate. It functions in the pathway carbohydrate degradation; pentose phosphate pathway; D-ribose 5-phosphate from D-ribulose 5-phosphate (non-oxidative stage): step 1/1. Functionally, catalyzes the reversible conversion of ribose-5-phosphate to ribulose 5-phosphate. In Prochlorococcus marinus (strain MIT 9303), this protein is Ribose-5-phosphate isomerase A.